A 474-amino-acid chain; its full sequence is MTKKLHIKTWGCQMNEYDSSKMADLLDATHGYQLTDVAEEADVLLLNTCSIREKAQEKVFHQLGRWKLLKEKNPDLIIGVGGCVASQEGEHIRQRAHYVDIIFGPQTLHRLPEMINSVRGDRSPVVDISFPEIEKFDRLPEPRAEGPTAFVSIMEGCNKYCTYCVVPYTRGEEVSRPSDDILFEIAQLAAQGVREVNLLGQNVNAWRGENYDGTTGSFADLLRLVAAIDGIDRIRFTTSHPIEFTDDIIEVYRDTPELVSFLHLPVQSGSDRILNLMGRTHTALEYKAIIRKLRAARPDIQISSDFIVGFPGETTDDFEKTMKLIADVNFDMSYSFIFSARPGTPAADMVDDVPEEEKKQRLYILQERINQQAMAWSRRMLGTTQRILVEGTSRKSIMELSGRTENNRVVNFEGTPDMIGKFVDVEITDVYPNSLRGKVVRTEDEMGLRVAETPESVIARTRKENDLGVGYYQP.

In terms of domain architecture, MTTase N-terminal spans 3–120 (KKLHIKTWGC…LPEMINSVRG (118 aa)). Residues Cys12, Cys49, Cys83, Cys157, Cys161, and Cys164 each coordinate [4Fe-4S] cluster. The 233-residue stretch at 143-375 (RAEGPTAFVS…QERINQQAMA (233 aa)) folds into the Radical SAM core domain. One can recognise a TRAM domain in the interval 378-441 (RRMLGTTQRI…PNSLRGKVVR (64 aa)).

This sequence belongs to the methylthiotransferase family. MiaB subfamily. As to quaternary structure, monomer. [4Fe-4S] cluster is required as a cofactor.

It is found in the cytoplasm. It carries out the reaction N(6)-dimethylallyladenosine(37) in tRNA + (sulfur carrier)-SH + AH2 + 2 S-adenosyl-L-methionine = 2-methylsulfanyl-N(6)-dimethylallyladenosine(37) in tRNA + (sulfur carrier)-H + 5'-deoxyadenosine + L-methionine + A + S-adenosyl-L-homocysteine + 2 H(+). Catalyzes the methylthiolation of N6-(dimethylallyl)adenosine (i(6)A), leading to the formation of 2-methylthio-N6-(dimethylallyl)adenosine (ms(2)i(6)A) at position 37 in tRNAs that read codons beginning with uridine. This chain is tRNA-2-methylthio-N(6)-dimethylallyladenosine synthase, found in Escherichia coli (strain UTI89 / UPEC).